Reading from the N-terminus, the 184-residue chain is UPF0149 protein PP_5201 (184 aa).

Belongs to the UPF0149 family.

The sequence is that of UPF0149 protein PP_5201 from Pseudomonas putida (strain ATCC 47054 / DSM 6125 / CFBP 8728 / NCIMB 11950 / KT2440).